A 101-amino-acid chain; its full sequence is Long chronological lifespan protein 1 (101 aa).

The signal sequence occupies residues 1–17 (MKNAALCEALPLLATCS). Residue S81 is the site of GPI-anchor amidated serine attachment. Positions 82–101 (FAKPSFSFFFFLLTSLLSPF) are cleaved as a propeptide — removed in mature form.

Its subcellular location is the cell membrane. This chain is Long chronological lifespan protein 1 (LCL1), found in Saccharomyces cerevisiae (strain ATCC 204508 / S288c) (Baker's yeast).